The following is a 297-amino-acid chain: Probable porphobilinogen deaminase (297 aa).

Position 241 is an S-(dipyrrolylmethanemethyl)cysteine (C241).

It belongs to the HMBS family. The cofactor is dipyrromethane.

It catalyses the reaction 4 porphobilinogen + H2O = hydroxymethylbilane + 4 NH4(+). It participates in porphyrin-containing compound metabolism; protoporphyrin-IX biosynthesis; coproporphyrinogen-III from 5-aminolevulinate: step 2/4. Functionally, tetrapolymerization of the monopyrrole PBG into the hydroxymethylbilane pre-uroporphyrinogen in several discrete steps. The sequence is that of Probable porphobilinogen deaminase from Pyrobaculum arsenaticum (strain DSM 13514 / JCM 11321 / PZ6).